The primary structure comprises 174 residues: Male-enhanced antigen 1 (174 aa).

2 disordered regions span residues 1–83 (MAAV…DGAA) and 95–123 (HLPD…IPMD). Acidic residues-rich tracts occupy residues 38-48 (SSEEPEEEQEE), 65-82 (PEQE…EDGA), and 101-110 (LESEDEDEEG). Residue S103 is modified to Phosphoserine.

Highly expressed in testis. Transcripts can be found in primary and secondary spermatocytes, and spermatids, but the protein itself is only detected in spermatids. No expression in Leydig cells, spermatogonia, or sperm. Very weak expression in the heart, kidney, spleen, thymus and ovary.

In terms of biological role, may play an important role in spermatogenesis and/or testis development. The sequence is that of Male-enhanced antigen 1 (Mea1) from Mus musculus (Mouse).